The sequence spans 543 residues: MENFKNNELESSPIINKNNSSHSINNEDNNYYSHNLEHNDNNNNDNNNTITNSHINNHDHKHNHEHEHKHKHNHDHNHDHDHNHEEEYGHGNELEHNNDQEHNVGNKNLLTNNNNQSKKKKHGHSHGGGEDGSSSGGGGGRHGHGHSHGGGSGSDHNHGSSDEDDEESKPLNQLRNLDSKKKARYSLILALTLTTIFMVGEIVGGYFANSLAIMTDAAHLLTDIGAMFLSLFAMWISQHPPTSSMSFGFHRAEILGALVSVLMIWALTGVLVYEAIQRILYPPDAVDGKIMFIIASCGLFINIIDAIILHWGSGGHGHSHGGGHGHSHGIGGGTQKKKSKKNRLLNNQGQDIEDLGGENGKNKKGVRNINVHSAYIHVLGDCFQSIGVMVASCIIWVHPHWKIADPITTLIFSVIVLGTTIKLLRESLGVLMEGVPPEIDVSEVKGDLSEIEGVTEVHDLHIWSITLGRPALSVHLTILPTIDPEEILSIANKILLEDYEINHTTIQIEKPLVKDKCKDHSCPPPKPKKKKIKNDNLSSPPNQ.

Residues 1 to 175 (MENFKNNELE…EESKPLNQLR (175 aa)) form a disordered region. Topologically, residues 1–186 (MENFKNNELE…LDSKKKARYS (186 aa)) are cytoplasmic. Composition is skewed to low complexity over residues 11–26 (SSPI…SINN) and 41–55 (NNNN…NSHI). Basic and acidic residues-rich tracts occupy residues 56 to 66 (NNHDHKHNHEH) and 76 to 104 (HNHD…EHNV). The span at 105–116 (GNKNLLTNNNNQ) shows a compositional bias: low complexity. The segment covering 130–140 (EDGSSSGGGGG) has biased composition (gly residues). A helical membrane pass occupies residues 187-207 (LILALTLTTIFMVGEIVGGYF). Over 208–216 (ANSLAIMTD) the chain is Extracellular. The helical transmembrane segment at 217-237 (AAHLLTDIGAMFLSLFAMWIS) threads the bilayer. At 238 to 251 (QHPPTSSMSFGFHR) the chain is on the cytoplasmic side. Residues 252-272 (AEILGALVSVLMIWALTGVLV) traverse the membrane as a helical segment. The Extracellular portion of the chain corresponds to 273-289 (YEAIQRILYPPDAVDGK). The chain crosses the membrane as a helical span at residues 290 to 310 (IMFIIASCGLFINIIDAIILH). Topologically, residues 311–375 (WGSGGHGHSH…VRNINVHSAY (65 aa)) are cytoplasmic. Residues 319 to 342 (SHGGGHGHSHGIGGGTQKKKSKKN) form a disordered region. Residues 376-396 (IHVLGDCFQSIGVMVASCIIW) form a helical membrane-spanning segment. Topologically, residues 397-402 (VHPHWK) are extracellular. A helical membrane pass occupies residues 403-423 (IADPITTLIFSVIVLGTTIKL). Residues 424–543 (LRESLGVLME…NDNLSSPPNQ (120 aa)) lie on the Cytoplasmic side of the membrane. A disordered region spans residues 516 to 543 (KCKDHSCPPPKPKKKKIKNDNLSSPPNQ).

This sequence belongs to the cation diffusion facilitator (CDF) transporter (TC 2.A.4) family. SLC30A subfamily.

The protein localises to the membrane. Its function is as follows. May be involved in zinc transport from the cytoplasm to either intracellular organelles or extracellular spaces. This Dictyostelium discoideum (Social amoeba) protein is Probable zinc transporter protein DDB_G0283629.